A 155-amino-acid polypeptide reads, in one-letter code: 2-C-methyl-D-erythritol 2,4-cyclodiphosphate synthase (155 aa).

D9 and H11 together coordinate a divalent metal cation. 4-CDP-2-C-methyl-D-erythritol 2-phosphate contacts are provided by residues 9–11 (DSH) and 35–36 (HS). H43 is an a divalent metal cation binding site. 57–59 (DIG) provides a ligand contact to 4-CDP-2-C-methyl-D-erythritol 2-phosphate.

The protein belongs to the IspF family. Homotrimer. The cofactor is a divalent metal cation.

The catalysed reaction is 4-CDP-2-C-methyl-D-erythritol 2-phosphate = 2-C-methyl-D-erythritol 2,4-cyclic diphosphate + CMP. It functions in the pathway isoprenoid biosynthesis; isopentenyl diphosphate biosynthesis via DXP pathway; isopentenyl diphosphate from 1-deoxy-D-xylulose 5-phosphate: step 4/6. In terms of biological role, involved in the biosynthesis of isopentenyl diphosphate (IPP) and dimethylallyl diphosphate (DMAPP), two major building blocks of isoprenoid compounds. Catalyzes the conversion of 4-diphosphocytidyl-2-C-methyl-D-erythritol 2-phosphate (CDP-ME2P) to 2-C-methyl-D-erythritol 2,4-cyclodiphosphate (ME-CPP) with a corresponding release of cytidine 5-monophosphate (CMP). In Koribacter versatilis (strain Ellin345), this protein is 2-C-methyl-D-erythritol 2,4-cyclodiphosphate synthase.